Here is a 336-residue protein sequence, read N- to C-terminus: Protein REVEILLE 7-like (336 aa).

Residues 60–114 (TVTKQREKWSEEEHDRFLEAIKLYGRGWRQIQEHIGTKTAVQIRSHAQKFFSKMA) form the HTH myb-type domain. The H-T-H motif DNA-binding region spans 87–110 (WRQIQEHIGTKTAVQIRSHAQKFF). A disordered region spans residues 114-197 (AQEADSRSEG…KQPFKDDSDI (84 aa)). The span at 134 to 144 (RPKRKPAHPYP) shows a compositional bias: basic residues. Over residues 145–158 (RKSPVPYTQSPPPN) the composition is skewed to pro residues. Residues 167–189 (KSPTSVLSSFGSEDQNNYTTSKQ) are compositionally biased toward polar residues.

It is found in the nucleus. In terms of biological role, probable transcription factor. The protein is Protein REVEILLE 7-like (RVE7L) of Arabidopsis thaliana (Mouse-ear cress).